The following is a 359-amino-acid chain: Lactosylceramide 4-alpha-galactosyltransferase (359 aa).

Topologically, residues 1–30 (MGISCSHLEETMSKPPDCLLRMLRGTPRQR) are cytoplasmic. A helical; Signal-anchor for type II membrane protein transmembrane segment spans residues 31–51 (VFTFFIISFKFMFLISILIYW). Residues 52 to 359 (HTVGAPKDQR…TTHRAMKMYL (308 aa)) lie on the Lumenal side of the membrane. Positions 198–200 (DTD) match the DXD motif motif. N-linked (GlcNAc...) asparagine glycosylation is found at Asn-209 and Asn-315.

Belongs to the glycosyltransferase 32 family.

The protein resides in the golgi apparatus membrane. It catalyses the reaction a beta-D-Gal-(1-&gt;4)-beta-D-Glc-(1&lt;-&gt;1)-Cer(d18:1(4E)) + UDP-alpha-D-galactose = a globoside Gb3Cer (d18:1(4E)) + UDP + H(+). The catalysed reaction is a beta-D-Gal-(1&lt;-&gt;1')-ceramide + UDP-alpha-D-galactose = alpha-D-Gal-(1-&gt;4)-beta-D-Gal-(1&lt;-&gt;1')-Cer + UDP + H(+). It functions in the pathway glycolipid biosynthesis. Functionally, catalyzes the transfer of galactose from UDP-alpha-D-galactose to lactosylceramide/beta-D-galactosyl-(1-&gt;4)-beta-D-glucosyl-(1&lt;-&gt;1)-ceramide(d18:1(4E)) to produce globotriaosylceramide/globoside Gb3Cer (d18:1(4E)). Also able to transfer galactose to galactosylceramide/beta-D-Gal-(1&lt;-&gt;1')-Cer. Globoside Gb3Cer is a glycosphingolipid of the globo serie, one of the major types of neutral root structures of glycosphingolipids, that constitute a significant portion of mammalian cell membranes. The protein is Lactosylceramide 4-alpha-galactosyltransferase of Mus musculus (Mouse).